Here is a 225-residue protein sequence, read N- to C-terminus: Uridylate kinase (225 aa).

Residue 9–10 (GS) participates in ATP binding. Glycine 46 is a UMP binding site. ATP contacts are provided by glycine 47 and arginine 51. Residues aspartate 67 and 115 to 121 (THPAHTT) contribute to the UMP site. Positions 141, 142, 147, and 150 each coordinate ATP.

This sequence belongs to the UMP kinase family. As to quaternary structure, homohexamer.

It is found in the cytoplasm. The catalysed reaction is UMP + ATP = UDP + ADP. It functions in the pathway pyrimidine metabolism; CTP biosynthesis via de novo pathway; UDP from UMP (UMPK route): step 1/1. Its activity is regulated as follows. Inhibited by UTP. Its function is as follows. Catalyzes the reversible phosphorylation of UMP to UDP. The sequence is that of Uridylate kinase from Methanococcus maripaludis (strain C6 / ATCC BAA-1332).